Consider the following 199-residue polypeptide: NAD(P)H quinone oxidoreductase PST3 (199 aa).

The 189-residue stretch at Val5–Phe193 folds into the Flavodoxin-like domain. FMN contacts are provided by residues Ser11–His15 and Ile111–Gly165.

Belongs to the WrbA family. It depends on FMN as a cofactor.

Its subcellular location is the cell membrane. It carries out the reaction a quinone + NADH + H(+) = a quinol + NAD(+). It catalyses the reaction a quinone + NADPH + H(+) = a quinol + NADP(+). In terms of biological role, flavodoxin-like protein (FLP) that plays a role in cell wall integrity, oxidative stress protection and virulence. FLPs act as NAD(P)H quinone oxidoreductases. Reduces ubiquinone (coenzyme Q), enabling it to serve as an antioxidant in the membrane. The sequence is that of NAD(P)H quinone oxidoreductase PST3 from Candida albicans (strain SC5314 / ATCC MYA-2876) (Yeast).